The sequence spans 525 residues: Asparagine synthetase domain-containing protein YML096W (525 aa).

Residue Cys2 is the For GATase activity of the active site. In terms of domain architecture, Glutamine amidotransferase type-2 spans 2 to 209 (CGILLHYCPN…LNSNQRSHLP (208 aa)). Residues 210-523 (YEVTSEIDLN…GTDLLKENRN (314 aa)) form the Asparagine synthetase domain. The segment at 503–525 (SAKMTKDGNKHGTDLLKENRNCS) is disordered. Basic and acidic residues predominate over residues 506–525 (MTKDGNKHGTDLLKENRNCS).

The protein resides in the cytoplasm. The chain is Asparagine synthetase domain-containing protein YML096W from Saccharomyces cerevisiae (strain ATCC 204508 / S288c) (Baker's yeast).